Consider the following 675-residue polypeptide: MNRFFNRELSWLAFNTRVLNEAKDESLPLLERLKFLAIYDTNLDEFYMIRVAGLKQLYEHKIASKGIDGASPEEQLEKIKHYLAHEIEERELEFQKIQALLFKKGLCITPYNELNLEQKAKAKTYFKEQLYALVLPFKLDSSHTFPPLANLTFALFARIKDKETQIISYALIKLPSFIFRFVELEKGLFVLAEEIVEAHLEELFLEHEILDCMAFRVTCDADIAITEDEAHDYADLMSKSLRKRNQGEIVRLQTQKGSQELLKTLLASLRSFQTHSYKKHKLTGMHIYKSAIMLNLGDLWELVNHSDFKALKSPNFTPKIHPHFNENDLFKSIEKQDLLLFHPYESFEPVIDLIEQAASDPATLSIKMTLYRVGKHSPIVKALIEAASKIQVSVLVELKARFDEESNLHWAKALERAGALVVYGVFKLKVHAKMLLITKKTDNQLRHFTHLSTGNYNPLSAKVYTDVSFFSAKNEIANDIIKLFHSLLTSSATNSALETLFMAPKQIKPKIIELIQNEMNHQQEGYIILKANALVDSEIIEWLYQASQKGVKIDLIIRGICCLKPQVKGLSENIRVYSIVGKYLEHARIYYFKHENIYFSSADLMPRNLERRVELLIPATNPKIAHKLLHILEIQLKDTLKRYELNSKGRYIKVSNPNDPLNSQDYFEKQALKTF.

Asn42 contributes to the ATP binding site. The Mg(2+) site is built by Arg372 and Arg401. His431 functions as the Phosphohistidine intermediate in the catalytic mechanism. Positions 464, 558, and 586 each coordinate ATP.

This sequence belongs to the polyphosphate kinase 1 (PPK1) family. It depends on Mg(2+) as a cofactor. An intermediate of this reaction is the autophosphorylated ppk in which a phosphate is covalently linked to a histidine residue through a N-P bond.

The catalysed reaction is [phosphate](n) + ATP = [phosphate](n+1) + ADP. Catalyzes the reversible transfer of the terminal phosphate of ATP to form a long-chain polyphosphate (polyP). This Helicobacter pylori (strain ATCC 700392 / 26695) (Campylobacter pylori) protein is Polyphosphate kinase.